We begin with the raw amino-acid sequence, 366 residues long: UDP-N-acetylglucosamine--N-acetylmuramyl-(pentapeptide) pyrophosphoryl-undecaprenol N-acetylglucosamine transferase (366 aa).

UDP-N-acetyl-alpha-D-glucosamine is bound by residues 14-16, asparagine 125, arginine 168, serine 196, and glutamine 297; that span reads TGG.

It belongs to the glycosyltransferase 28 family. MurG subfamily.

The protein resides in the cell inner membrane. The enzyme catalyses di-trans,octa-cis-undecaprenyl diphospho-N-acetyl-alpha-D-muramoyl-L-alanyl-D-glutamyl-meso-2,6-diaminopimeloyl-D-alanyl-D-alanine + UDP-N-acetyl-alpha-D-glucosamine = di-trans,octa-cis-undecaprenyl diphospho-[N-acetyl-alpha-D-glucosaminyl-(1-&gt;4)]-N-acetyl-alpha-D-muramoyl-L-alanyl-D-glutamyl-meso-2,6-diaminopimeloyl-D-alanyl-D-alanine + UDP + H(+). It functions in the pathway cell wall biogenesis; peptidoglycan biosynthesis. Functionally, cell wall formation. Catalyzes the transfer of a GlcNAc subunit on undecaprenyl-pyrophosphoryl-MurNAc-pentapeptide (lipid intermediate I) to form undecaprenyl-pyrophosphoryl-MurNAc-(pentapeptide)GlcNAc (lipid intermediate II). The chain is UDP-N-acetylglucosamine--N-acetylmuramyl-(pentapeptide) pyrophosphoryl-undecaprenol N-acetylglucosamine transferase from Bradyrhizobium diazoefficiens (strain JCM 10833 / BCRC 13528 / IAM 13628 / NBRC 14792 / USDA 110).